The primary structure comprises 252 residues: tRNA1(Val) (adenine(37)-N6)-methyltransferase (252 aa).

The protein belongs to the methyltransferase superfamily. tRNA (adenine-N(6)-)-methyltransferase family.

The protein localises to the cytoplasm. It carries out the reaction adenosine(37) in tRNA1(Val) + S-adenosyl-L-methionine = N(6)-methyladenosine(37) in tRNA1(Val) + S-adenosyl-L-homocysteine + H(+). Specifically methylates the adenine in position 37 of tRNA(1)(Val) (anticodon cmo5UAC). This is tRNA1(Val) (adenine(37)-N6)-methyltransferase from Yersinia pseudotuberculosis serotype O:3 (strain YPIII).